Here is a 186-residue protein sequence, read N- to C-terminus: Elongation factor P (186 aa).

This sequence belongs to the elongation factor P family.

Its subcellular location is the cytoplasm. It participates in protein biosynthesis; polypeptide chain elongation. In terms of biological role, involved in peptide bond synthesis. Stimulates efficient translation and peptide-bond synthesis on native or reconstituted 70S ribosomes in vitro. Probably functions indirectly by altering the affinity of the ribosome for aminoacyl-tRNA, thus increasing their reactivity as acceptors for peptidyl transferase. The polypeptide is Elongation factor P (Streptococcus pneumoniae (strain Hungary19A-6)).